The chain runs to 360 residues: UPF0324 membrane protein DVU_0123 (360 aa).

10 helical membrane-spanning segments follow: residues 20-42 (VTES…FVAP), 57-79 (KDFI…PAVF), 100-122 (SYSL…VFLF), 142-164 (AACL…APAV), 171-193 (MAYS…PLIG), 203-225 (FGAF…FGFS), 232-254 (AGIY…AIMA), 278-297 (FPLF…AGVL), 310-327 (EWAF…TRLS), and 337-359 (FLFG…LLFM).

It belongs to the UPF0324 family.

Its subcellular location is the cell membrane. This Nitratidesulfovibrio vulgaris (strain ATCC 29579 / DSM 644 / CCUG 34227 / NCIMB 8303 / VKM B-1760 / Hildenborough) (Desulfovibrio vulgaris) protein is UPF0324 membrane protein DVU_0123.